The primary structure comprises 101 residues: Small ribosomal subunit protein uS14 (101 aa).

Over residues 1 to 11 the composition is skewed to basic and acidic residues; the sequence is MAKKSAIETNE. Positions 1–20 are disordered; sequence MAKKSAIETNERRRKLATGH.

It belongs to the universal ribosomal protein uS14 family. As to quaternary structure, part of the 30S ribosomal subunit. Contacts proteins S3 and S10.

Binds 16S rRNA, required for the assembly of 30S particles and may also be responsible for determining the conformation of the 16S rRNA at the A site. The chain is Small ribosomal subunit protein uS14 from Xanthobacter autotrophicus (strain ATCC BAA-1158 / Py2).